A 262-amino-acid chain; its full sequence is MIDQSAFIHPSAIVEDGAIIHADVHVGPFCVIGPQVEIGARTVLESHVVVTGITRIGEDNQIYPFASLGDVNQDLKYAGEPTRVEIGHRNRIRESVTIHRGTIQGGEVTRVGSDNLLMVNAHVAHDCTVGSHCIMANNATLGGHVAVDDYAIIGGMTAVHQFCVIGAYVMVGGCSGVAQDVPPFVIAQGNHATPFGLNIEGLKRRGFDHAALHAIRAAYKIIYRSGKTLDEAKPELQALAQEHQVVNTFLDFLLRSQRGIIR.

It belongs to the transferase hexapeptide repeat family. LpxA subfamily. Homotrimer.

It is found in the cytoplasm. It carries out the reaction a (3R)-hydroxyacyl-[ACP] + UDP-N-acetyl-alpha-D-glucosamine = a UDP-3-O-[(3R)-3-hydroxyacyl]-N-acetyl-alpha-D-glucosamine + holo-[ACP]. It participates in glycolipid biosynthesis; lipid IV(A) biosynthesis; lipid IV(A) from (3R)-3-hydroxytetradecanoyl-[acyl-carrier-protein] and UDP-N-acetyl-alpha-D-glucosamine: step 1/6. In terms of biological role, involved in the biosynthesis of lipid A, a phosphorylated glycolipid that anchors the lipopolysaccharide to the outer membrane of the cell. This Sodalis glossinidius (strain morsitans) protein is Acyl-[acyl-carrier-protein]--UDP-N-acetylglucosamine O-acyltransferase.